A 642-amino-acid polypeptide reads, in one-letter code: Transcription factor 4 (642 aa).

The span at 1-25 (MFSPPVSSGKNGPTSLASGHFTGSN) shows a compositional bias: polar residues. The essential for MYOD1 inhibition stretch occupies residues 1–59 (MFSPPVSSGKNGPTSLASGHFTGSNVEDRSSSGSWGNGGHPSPSRNYGDGTPYDHMTSR). Disordered stretches follow at residues 1–296 (MFSP…SQTG), 311–354 (HTNN…EGPL), 444–545 (PNQV…MANN), and 609–642 (KRREEEKVSSEPPPLSLAGPHPGMGDASNHMGQM). Phosphoserine occurs at positions 42, 63, and 68. Composition is skewed to polar residues over residues 83-98 (GSYSSYGRESNLQGCH), 112-130 (GTLSPTKPGSQYYQYSSNN), 181-191 (PAASTFPSSFF), 218-230 (GSSSHIPQSSSYC), and 241-281 (PSHS…TDSI). The segment covering 312-323 (TNNSFSSNPSTP) has biased composition (low complexity). The span at 340–349 (NGGQASSSPN) shows a compositional bias: polar residues. The residue at position 347 (S347) is a Phosphoserine. The interval 354 to 375 (LHSLQSRIEDRLERLDDAIHVL) is leucine-zipper. Composition is skewed to low complexity over residues 444–455 (PNQVPVPQLPVQ) and 478–487 (GQSVSSGSSE). S490 carries the phosphoserine modification. 2 stretches are compositionally biased toward basic and acidic residues: residues 502–517 (KSSEDKKLDDDKKDIK) and 530–545 (PEQKAEREKERRMANN). The 54-residue stretch at 539–592 (ERRMANNARERLRVRDINEAFKELGRMVQLHLKSDKPQTKLLILHQAVAVILSL) folds into the bHLH domain. Positions 594–617 (QQVRERNLNPKAACLKRREEEKVS) are class A specific domain.

As to quaternary structure, efficient DNA binding requires dimerization with another bHLH protein. Forms homo- or heterooligomers with myogenin. Interacts with HIVEP2. Interacts with NEUROD2. Interacts with AGBL1. In terms of tissue distribution, widely expressed.

The protein localises to the nucleus. Functionally, transcription factor that binds to the immunoglobulin enhancer Mu-E5/KE5-motif. Involved in the initiation of neuronal differentiation. Activates transcription by binding to the E box (5'-CANNTG-3'). Binds to the thyroglobulin promoter. The protein is Transcription factor 4 (TCF4) of Canis lupus familiaris (Dog).